The chain runs to 286 residues: Transcription factor bHLH137 (286 aa).

A compositionally biased stretch (polar residues) spans 63–84 (SGSEKLANTTKTATTGSSSCDQ). The segment at 63-149 (SGSEKLANTT…RGQATDSHSL (87 aa)) is disordered. A bHLH domain is found at 142–192 (QATDSHSLAERVRREKISERMRTLQNLVPGCDKVTGKALMLDEIINYVQTL).

As to quaternary structure, homodimer.

It is found in the nucleus. This Arabidopsis thaliana (Mouse-ear cress) protein is Transcription factor bHLH137 (BHLH137).